The following is a 488-amino-acid chain: Altronate oxidoreductase (488 aa).

Residue 18 to 29 (VIQFGEGNFLRA) coordinates NAD(+).

This sequence belongs to the mannitol dehydrogenase family. UxaB subfamily.

The catalysed reaction is D-altronate + NAD(+) = keto-D-tagaturonate + NADH + H(+). Its pathway is carbohydrate metabolism; pentose and glucuronate interconversion. This chain is Altronate oxidoreductase, found in Pectobacterium atrosepticum (strain SCRI 1043 / ATCC BAA-672) (Erwinia carotovora subsp. atroseptica).